A 663-amino-acid polypeptide reads, in one-letter code: MPMSARSRRSNPRLPPSPSSSSSSDAVRASPHSSPPSRLRPPSANPDVSSNILLFLIGFRLVNALTVRTFFQPDEFFQSLEPAWKIAFGTNQGPWITWEWEHQLRSSLHPLIFAAVYTVADLVARTLGLTPTSRAELLIAGPGITQAVIAAVGDFYTWKLARYIYGDRSHESWATVRIRSNAIEADADQLQLALTVVSLASVALYRSAWGERQTLAREALICGSSVLAVSTVVDRFFYGFWTFPPLRFLYFNVAQSLAAFYGRNDWSYYASQGYPLLLTTALPFTLVGLYRTLKTPPKLEKQKGSILVQLASISLAMPATLSVITHKEVRFIYPLLPALHILSASPLVEFFIPALTTTNREYISRRLTLIFLLWANVAIAIYTTLFHASGVISVLSYIREQHQIHGTANIPSLPKESPASYGGITTGFLMPCHSTPWRSHLVEPTIHAWALSCEPPVGLTAEEKAAYRDEADQFYDNPTQFLQDNMVGGLRHIPRRPSYATPPSSQRQPTQLFPPHEWPDYLVFFAQLEPTLKDALRGSSYGECWRTFNSAWHDDSRRRGDVVVWCLDHAKQQAWQSQKHQRELEDRDRQFDHIIKRFQRDATPSKSWHWSHWTSPFSSQSKSWSWPWERKKRTLFGYELPDLPQWGWFGKRKKKTLLSDFWF.

Basic residues predominate over residues 1–11 (MPMSARSRRSN). Residues 1–44 (MPMSARSRRSNPRLPPSPSSSSSSDAVRASPHSSPPSRLRPPSA) form a disordered region. The span at 19-42 (SSSSSSDAVRASPHSSPPSRLRPP) shows a compositional bias: low complexity. Helical transmembrane passes span 47–67 (DVSSNILLFLIGFRLVNALTV), 110–130 (PLIFAAVYTVADLVARTLGLT), 137–157 (LLIAGPGITQAVIAAVGDFYT), 226–246 (VLAVSTVVDRFFYGFWTFPPL), 269–289 (YASQGYPLLLTTALPFTLVGL), 304–324 (GSILVQLASISLAMPATLSVI), 335–355 (LLPALHILSASPLVEFFIPAL), and 367–387 (LTLIFLLWANVAIAIYTTLFH). Residues 492-512 (HIPRRPSYATPPSSQRQPTQL) form a disordered region. Over residues 501 to 511 (TPPSSQRQPTQ) the composition is skewed to polar residues.

It belongs to the glycosyltransferase 22 family. PIGB subfamily.

It localises to the endoplasmic reticulum membrane. It participates in glycolipid biosynthesis; glycosylphosphatidylinositol-anchor biosynthesis. In terms of biological role, mannosyltransferase involved in glycosylphosphatidylinositol-anchor biosynthesis. Transfers the third mannose to Man2-GlcN-acyl-PI during GPI precursor assembly. The polypeptide is GPI mannosyltransferase 3 (gpi10) (Emericella nidulans (strain FGSC A4 / ATCC 38163 / CBS 112.46 / NRRL 194 / M139) (Aspergillus nidulans)).